The primary structure comprises 370 residues: Anhydro-N-acetylmuramic acid kinase (370 aa).

13–20 (GTSMDGVD) is an ATP binding site.

This sequence belongs to the anhydro-N-acetylmuramic acid kinase family.

It catalyses the reaction 1,6-anhydro-N-acetyl-beta-muramate + ATP + H2O = N-acetyl-D-muramate 6-phosphate + ADP + H(+). The protein operates within amino-sugar metabolism; 1,6-anhydro-N-acetylmuramate degradation. Its pathway is cell wall biogenesis; peptidoglycan recycling. Catalyzes the specific phosphorylation of 1,6-anhydro-N-acetylmuramic acid (anhMurNAc) with the simultaneous cleavage of the 1,6-anhydro ring, generating MurNAc-6-P. Is required for the utilization of anhMurNAc either imported from the medium or derived from its own cell wall murein, and thus plays a role in cell wall recycling. In Vibrio vulnificus (strain CMCP6), this protein is Anhydro-N-acetylmuramic acid kinase.